Reading from the N-terminus, the 649-residue chain is Exoribonuclease 2 (649 aa).

In terms of domain architecture, RNB spans 190-517 (RKDLTDLDFI…NHRLLKSIIK (328 aa)). Residues 562–644 (NQKFNAEITD…KTRSIIAKPV (83 aa)) enclose the S1 motif domain.

The protein belongs to the RNR ribonuclease family. RNase II subfamily.

Its subcellular location is the cytoplasm. The catalysed reaction is Exonucleolytic cleavage in the 3'- to 5'-direction to yield nucleoside 5'-phosphates.. In terms of biological role, involved in mRNA degradation. Hydrolyzes single-stranded polyribonucleotides processively in the 3' to 5' direction. The sequence is that of Exoribonuclease 2 from Buchnera aphidicola subsp. Acyrthosiphon pisum (strain 5A).